The following is a 301-amino-acid chain: Enolase-phosphatase E1 (301 aa).

The Mg(2+) site is built by Asp-22 and Glu-24. Substrate contacts are provided by residues 163 to 164 (SS) and Lys-197. Asp-222 serves as a coordination point for Mg(2+). Positions 273-301 (AQAGDTEAKRSASGDGALAAKKAPPTHDF) are disordered.

This sequence belongs to the HAD-like hydrolase superfamily. MasA/MtnC family. In terms of assembly, monomer. The cofactor is Mg(2+).

The protein localises to the cytoplasm. Its subcellular location is the nucleus. It catalyses the reaction 5-methylsulfanyl-2,3-dioxopentyl phosphate + H2O = 1,2-dihydroxy-5-(methylsulfanyl)pent-1-en-3-one + phosphate. Its pathway is amino-acid biosynthesis; L-methionine biosynthesis via salvage pathway; L-methionine from S-methyl-5-thio-alpha-D-ribose 1-phosphate: step 3/6. It functions in the pathway amino-acid biosynthesis; L-methionine biosynthesis via salvage pathway; L-methionine from S-methyl-5-thio-alpha-D-ribose 1-phosphate: step 4/6. Bifunctional enzyme that catalyzes the enolization of 2,3-diketo-5-methylthiopentyl-1-phosphate (DK-MTP-1-P) into the intermediate 2-hydroxy-3-keto-5-methylthiopentenyl-1-phosphate (HK-MTPenyl-1-P), which is then dephosphorylated to form the acireductone 1,2-dihydroxy-3-keto-5-methylthiopentene (DHK-MTPene). The sequence is that of Enolase-phosphatase E1 from Monosiga brevicollis (Choanoflagellate).